We begin with the raw amino-acid sequence, 520 residues long: Glutamate--cysteine ligase (520 aa).

It belongs to the glutamate--cysteine ligase type 1 family. Type 1 subfamily.

The enzyme catalyses L-cysteine + L-glutamate + ATP = gamma-L-glutamyl-L-cysteine + ADP + phosphate + H(+). It participates in sulfur metabolism; glutathione biosynthesis; glutathione from L-cysteine and L-glutamate: step 1/2. The sequence is that of Glutamate--cysteine ligase from Leptospira interrogans serogroup Icterohaemorrhagiae serovar Lai (strain 56601).